We begin with the raw amino-acid sequence, 824 residues long: Lon protease (824 aa).

Positions 1 to 23 are disordered; it reads MNEPMSLFDDLPEEHDEPQEAPE. Residues 10–20 show a composition bias toward acidic residues; sequence DLPEEHDEPQE. The Lon N-terminal domain occupies 26–222; that stretch reads LPMVVLGEMV…KVYLVLARQL (197 aa). 375–382 contacts ATP; that stretch reads GPPGVGKT. One can recognise a Lon proteolytic domain in the interval 617–798; it reads QDEVGVATGV…DEVLRIALSR (182 aa). Active-site residues include Ser704 and Lys747. Positions 800 to 824 are disordered; sequence PTPANNQNGSHTNNRGQPSPAPAGT. The span at 802 to 816 shows a compositional bias: polar residues; sequence PANNQNGSHTNNRGQ.

The protein belongs to the peptidase S16 family. As to quaternary structure, homohexamer. Organized in a ring with a central cavity.

The protein localises to the cytoplasm. The catalysed reaction is Hydrolysis of proteins in presence of ATP.. In terms of biological role, ATP-dependent serine protease that mediates the selective degradation of mutant and abnormal proteins as well as certain short-lived regulatory proteins. Required for cellular homeostasis and for survival from DNA damage and developmental changes induced by stress. Degrades polypeptides processively to yield small peptide fragments that are 5 to 10 amino acids long. Binds to DNA in a double-stranded, site-specific manner. The protein is Lon protease of Chloroflexus aggregans (strain MD-66 / DSM 9485).